We begin with the raw amino-acid sequence, 414 residues long: Tryptophan synthase beta chain (414 aa).

Lys-109 is subject to N6-(pyridoxal phosphate)lysine.

It belongs to the TrpB family. In terms of assembly, tetramer of two alpha and two beta chains. It depends on pyridoxal 5'-phosphate as a cofactor.

The catalysed reaction is (1S,2R)-1-C-(indol-3-yl)glycerol 3-phosphate + L-serine = D-glyceraldehyde 3-phosphate + L-tryptophan + H2O. It functions in the pathway amino-acid biosynthesis; L-tryptophan biosynthesis; L-tryptophan from chorismate: step 5/5. In terms of biological role, the beta subunit is responsible for the synthesis of L-tryptophan from indole and L-serine. This Prochlorococcus marinus (strain AS9601) protein is Tryptophan synthase beta chain.